The primary structure comprises 98 residues: MPSISTNITLAFITALLGMLIFRSHLMSSLLCLEGMMLSMFILSTLTILSLHFTTSFMMPILLLVFAACEAAVGLALLVTVSNTYGLDYIQNLNLLQC.

Helical transmembrane passes span 2–22, 29–49, and 61–81; these read PSIS…MLIF, SLLC…LTIL, and ILLL…LVTV.

The protein belongs to the complex I subunit 4L family. As to quaternary structure, core subunit of respiratory chain NADH dehydrogenase (Complex I) which is composed of 45 different subunits.

It is found in the mitochondrion inner membrane. The enzyme catalyses a ubiquinone + NADH + 5 H(+)(in) = a ubiquinol + NAD(+) + 4 H(+)(out). Its function is as follows. Core subunit of the mitochondrial membrane respiratory chain NADH dehydrogenase (Complex I) which catalyzes electron transfer from NADH through the respiratory chain, using ubiquinone as an electron acceptor. Part of the enzyme membrane arm which is embedded in the lipid bilayer and involved in proton translocation. The polypeptide is NADH-ubiquinone oxidoreductase chain 4L (MT-ND4L) (Hapalemur aureus (Golden bamboo lemur)).